Here is a 476-residue protein sequence, read N- to C-terminus: Serine--tRNA ligase (476 aa).

L-serine is bound at residue 279–281 (TAE). Residue 310–312 (RAE) participates in ATP binding. Glutamate 333 contributes to the L-serine binding site. Position 400–403 (400–403 (EISS)) interacts with ATP. Position 435 (serine 435) interacts with L-serine.

It belongs to the class-II aminoacyl-tRNA synthetase family. Type-1 seryl-tRNA synthetase subfamily. Homodimer. The tRNA molecule binds across the dimer.

The protein resides in the cytoplasm. It catalyses the reaction tRNA(Ser) + L-serine + ATP = L-seryl-tRNA(Ser) + AMP + diphosphate + H(+). The enzyme catalyses tRNA(Sec) + L-serine + ATP = L-seryl-tRNA(Sec) + AMP + diphosphate + H(+). Its pathway is aminoacyl-tRNA biosynthesis; selenocysteinyl-tRNA(Sec) biosynthesis; L-seryl-tRNA(Sec) from L-serine and tRNA(Sec): step 1/1. Its function is as follows. Catalyzes the attachment of serine to tRNA(Ser). Is also able to aminoacylate tRNA(Sec) with serine, to form the misacylated tRNA L-seryl-tRNA(Sec), which will be further converted into selenocysteinyl-tRNA(Sec). The sequence is that of Serine--tRNA ligase from Rhodopseudomonas palustris (strain BisA53).